Reading from the N-terminus, the 603-residue chain is Elongation factor 4 (603 aa).

In terms of domain architecture, tr-type G spans Ser-7 to Ser-189. GTP-binding positions include Asp-19–Thr-24 and Asn-136–Asp-139.

The protein belongs to the TRAFAC class translation factor GTPase superfamily. Classic translation factor GTPase family. LepA subfamily.

The protein resides in the cell inner membrane. It carries out the reaction GTP + H2O = GDP + phosphate + H(+). Its function is as follows. Required for accurate and efficient protein synthesis under certain stress conditions. May act as a fidelity factor of the translation reaction, by catalyzing a one-codon backward translocation of tRNAs on improperly translocated ribosomes. Back-translocation proceeds from a post-translocation (POST) complex to a pre-translocation (PRE) complex, thus giving elongation factor G a second chance to translocate the tRNAs correctly. Binds to ribosomes in a GTP-dependent manner. The sequence is that of Elongation factor 4 from Crocosphaera subtropica (strain ATCC 51142 / BH68) (Cyanothece sp. (strain ATCC 51142)).